The chain runs to 157 residues: Protein FAM218A (157 aa).

The disordered stretch occupies residues 104 to 127 (PAVTPPKLPGHSKSEGPPGKVRKR).

This is Protein FAM218A (FAM218A) from Homo sapiens (Human).